The primary structure comprises 273 residues: DNA repair protein RecO (273 aa).

This sequence belongs to the RecO family.

Involved in DNA repair and RecF pathway recombination. In Saccharopolyspora erythraea (strain ATCC 11635 / DSM 40517 / JCM 4748 / NBRC 13426 / NCIMB 8594 / NRRL 2338), this protein is DNA repair protein RecO.